The following is a 205-amino-acid chain: LexA repressor (205 aa).

The segment at residues 28–48 (RAEIAHKLGFRSANSAEEHLK) is a DNA-binding region (H-T-H motif). Residues serine 122 and lysine 159 each act as for autocatalytic cleavage activity in the active site.

It belongs to the peptidase S24 family. As to quaternary structure, homodimer.

It catalyses the reaction Hydrolysis of Ala-|-Gly bond in repressor LexA.. Represses a number of genes involved in the response to DNA damage (SOS response), including recA and lexA. In the presence of single-stranded DNA, RecA interacts with LexA causing an autocatalytic cleavage which disrupts the DNA-binding part of LexA, leading to derepression of the SOS regulon and eventually DNA repair. The chain is LexA repressor from Idiomarina loihiensis (strain ATCC BAA-735 / DSM 15497 / L2-TR).